We begin with the raw amino-acid sequence, 290 residues long: Pantothenate synthetase (290 aa).

30-37 (MGALHEGH) contacts ATP. Catalysis depends on His37, which acts as the Proton donor. Position 61 (Gln61) interacts with (R)-pantoate. Gln61 lines the beta-alanine pocket. An ATP-binding site is contributed by 147-150 (GEKD). A (R)-pantoate-binding site is contributed by Gln153. ATP-binding positions include Val176 and 184 to 187 (KSSR).

This sequence belongs to the pantothenate synthetase family. As to quaternary structure, homodimer.

The protein resides in the cytoplasm. The catalysed reaction is (R)-pantoate + beta-alanine + ATP = (R)-pantothenate + AMP + diphosphate + H(+). It functions in the pathway cofactor biosynthesis; (R)-pantothenate biosynthesis; (R)-pantothenate from (R)-pantoate and beta-alanine: step 1/1. Functionally, catalyzes the condensation of pantoate with beta-alanine in an ATP-dependent reaction via a pantoyl-adenylate intermediate. The chain is Pantothenate synthetase from Chlorobium chlorochromatii (strain CaD3).